We begin with the raw amino-acid sequence, 166 residues long: Large ribosomal subunit protein uL11 (166 aa).

It belongs to the universal ribosomal protein uL11 family.

The protein is Large ribosomal subunit protein uL11 (rpl12) of Dictyostelium discoideum (Social amoeba).